The primary structure comprises 252 residues: Geranylgeranylglyceryl phosphate synthase (252 aa).

Residues D22 and S51 each contribute to the Mg(2+) site. Residues 170-176 (YFEAGSG), 201-202 (GG), and 223-224 (GS) contribute to the sn-glycerol 1-phosphate site.

It belongs to the GGGP/HepGP synthase family. Group II subfamily. Mg(2+) is required as a cofactor.

The protein resides in the cytoplasm. The enzyme catalyses sn-glycerol 1-phosphate + (2E,6E,10E)-geranylgeranyl diphosphate = sn-3-O-(geranylgeranyl)glycerol 1-phosphate + diphosphate. It participates in membrane lipid metabolism; glycerophospholipid metabolism. In terms of biological role, prenyltransferase that catalyzes the transfer of the geranylgeranyl moiety of geranylgeranyl diphosphate (GGPP) to the C3 hydroxyl of sn-glycerol-1-phosphate (G1P). This reaction is the first ether-bond-formation step in the biosynthesis of archaeal membrane lipids. This is Geranylgeranylglyceryl phosphate synthase from Thermoplasma volcanium (strain ATCC 51530 / DSM 4299 / JCM 9571 / NBRC 15438 / GSS1).